A 312-amino-acid polypeptide reads, in one-letter code: Probable rRNA-processing protein EBP2 (312 aa).

Positions 1 to 32 are disordered; the sequence is MLHHEDESSPESDSDFDASELTDKELQEAFSQ. A compositionally biased stretch (acidic residues) spans 8–20; the sequence is SSPESDSDFDASE. A coiled-coil region spans residues 140 to 176; it reads EMAKTDQHMQKIRHKLQLKQASMEKSEKAKQLRALRK. The tract at residues 211–312 is disordered; that stretch reads LDFLEGDQTP…VRQKMKSKRR (102 aa). Residues 282–312 show a composition bias toward basic residues; sequence KGPHRPGKKGGKNANKRPGKNVRQKMKSKRR.

The protein belongs to the EBP2 family.

The protein localises to the nucleus. It localises to the nucleolus. Required for the processing of the 27S pre-rRNA. This Xenopus laevis (African clawed frog) protein is Probable rRNA-processing protein EBP2 (ebna1bp2).